We begin with the raw amino-acid sequence, 146 residues long: Large ribosomal subunit protein uL15y (146 aa).

2 stretches are compositionally biased toward basic residues: residues 1 to 14 (MATA…KRGH) and 21 to 30 (RIGKHRKHPG). The tract at residues 1–38 (MATALKKNRKKRGHVSAGHGRIGKHRKHPGGRGNAGGM) is disordered.

The protein belongs to the universal ribosomal protein uL15 family.

This is Large ribosomal subunit protein uL15y (RPL27AB) from Arabidopsis thaliana (Mouse-ear cress).